The following is a 95-amino-acid chain: Hge-scorpine (95 aa).

The signal sequence occupies residues 1–19; it reads MNTKLTVLCFLGIVTIVSC. The 40-residue stretch at 55–94 folds into the BetaSPN-type CS-alpha/beta domain; sequence QFGCFANVDVKGDCKRHCKAEDKEGICHGTKCKCGVPISY. 3 disulfide bridges follow: Cys-58-Cys-81, Cys-68-Cys-86, and Cys-72-Cys-88.

The protein belongs to the long chain scorpion toxin family. Class 3 subfamily. As to expression, expressed by the venom gland.

It is found in the secreted. Functionally, has antibacterial activity against B.subtilis, but not against S.aureus. Also has hemolytic and cytolytic activities. Since cell lysis occurs at the tested concentrations, observation of activity on potassium channels is impossible. In terms of biological role, blocks Kv1.1/KCNA1 (IC(50)=185 nM) potassium channels. Shows a weak hemolytic activity. This Hoffmannihadrurus gertschi (Scorpion) protein is Hge-scorpine.